The chain runs to 943 residues: Isoleucine--tRNA ligase (943 aa).

A 'HIGH' region motif is present at residues Pro58–His68. Residue Glu567 participates in L-isoleucyl-5'-AMP binding. A 'KMSKS' region motif is present at residues Lys608–Ser612. Residue Lys611 participates in ATP binding. Cys906, Cys909, Cys926, and Cys929 together coordinate Zn(2+).

Belongs to the class-I aminoacyl-tRNA synthetase family. IleS type 1 subfamily. Monomer. It depends on Zn(2+) as a cofactor.

The protein localises to the cytoplasm. It catalyses the reaction tRNA(Ile) + L-isoleucine + ATP = L-isoleucyl-tRNA(Ile) + AMP + diphosphate. In terms of biological role, catalyzes the attachment of isoleucine to tRNA(Ile). As IleRS can inadvertently accommodate and process structurally similar amino acids such as valine, to avoid such errors it has two additional distinct tRNA(Ile)-dependent editing activities. One activity is designated as 'pretransfer' editing and involves the hydrolysis of activated Val-AMP. The other activity is designated 'posttransfer' editing and involves deacylation of mischarged Val-tRNA(Ile). This Pseudomonas fluorescens (strain Pf0-1) protein is Isoleucine--tRNA ligase.